The following is a 495-amino-acid chain: uncharacterized protein (495 aa).

A CHY-type zinc finger spans residues 389-457 (PLPNNGACEH…KDATCPHCGN (69 aa)). Zn(2+) contacts are provided by C396, H398, C410, C411, C417, C420, H421, H427, C437, C440, C452, and C455. The span at 473–483 (GMRDRVRMSRK) shows a compositional bias: basic and acidic residues. The tract at residues 473–495 (GMRDRVRMSRKDPRKYKRKHHGN) is disordered. Positions 484–495 (DPRKYKRKHHGN) are enriched in basic residues.

The protein localises to the cytoplasm. This is an uncharacterized protein from Schizosaccharomyces pombe (strain 972 / ATCC 24843) (Fission yeast).